A 394-amino-acid chain; its full sequence is Phosphoglycerate kinase (394 aa).

Substrate contacts are provided by residues 21–23 (DFN), arginine 36, 59–62 (HFGR), arginine 118, and arginine 151. Residues lysine 201, glutamate 323, and 349–352 (GGDS) contribute to the ATP site.

Belongs to the phosphoglycerate kinase family. As to quaternary structure, monomer.

It localises to the cytoplasm. It carries out the reaction (2R)-3-phosphoglycerate + ATP = (2R)-3-phospho-glyceroyl phosphate + ADP. It participates in carbohydrate degradation; glycolysis; pyruvate from D-glyceraldehyde 3-phosphate: step 2/5. This is Phosphoglycerate kinase from Brevibacillus brevis (strain 47 / JCM 6285 / NBRC 100599).